Reading from the N-terminus, the 233-residue chain is Small ribosomal subunit protein uS3 (233 aa).

Residues 39–107 (VREFLKKRLG…PVHVNIEEVR (69 aa)) form the KH type-2 domain. Residues 212–233 (VQATPAAPEKKMRKGARNAAAN) are disordered.

The protein belongs to the universal ribosomal protein uS3 family. In terms of assembly, part of the 30S ribosomal subunit. Forms a tight complex with proteins S10 and S14.

Functionally, binds the lower part of the 30S subunit head. Binds mRNA in the 70S ribosome, positioning it for translation. This Chromobacterium violaceum (strain ATCC 12472 / DSM 30191 / JCM 1249 / CCUG 213 / NBRC 12614 / NCIMB 9131 / NCTC 9757 / MK) protein is Small ribosomal subunit protein uS3.